The following is a 256-amino-acid chain: Small ribosomal subunit protein eS1B (256 aa).

Ala-2 is subject to N-acetylalanine; partial.

The protein belongs to the eukaryotic ribosomal protein eS1 family. As to quaternary structure, component of the small ribosomal subunit. Mature ribosomes consist of a small (40S) and a large (60S) subunit. The 40S subunit contains about 33 different proteins and 1 molecule of RNA (18S). The 60S subunit contains about 49 different proteins and 3 molecules of RNA (25S, 5.8S and 5S).

The protein resides in the cytoplasm. This Scheffersomyces stipitis (strain ATCC 58785 / CBS 6054 / NBRC 10063 / NRRL Y-11545) (Yeast) protein is Small ribosomal subunit protein eS1B.